The following is a 267-amino-acid chain: Cyclin-C (267 aa).

Residues 48–151 enclose the Cyclin N-terminal domain; it reads IQVLGEQLKL…LLENLDCCLI (104 aa).

The protein belongs to the cyclin family. Cyclin C subfamily. As to quaternary structure, component of the Cdk8 module of the Mediator complex.

It localises to the nucleus. Functionally, component of the Mediator complex, a coactivator involved in regulated gene transcription of nearly all RNA polymerase II-dependent genes. Mediator functions as a bridge to convey information from gene-specific regulatory proteins to the basal RNA polymerase II transcription machinery. Mediator is recruited to promoters by direct interactions with regulatory proteins and serves as a scaffold for the assembly of a functional preinitiation complex with RNA polymerase II and the general transcription factors. Binds to and activates cyclin-dependent kinase Cdk8 that phosphorylates the CTD (C-terminal domain) of the large subunit of RNA polymerase II (RNAp II), which may inhibit the formation of a transcription initiation complex. This chain is Cyclin-C (CycC), found in Drosophila pseudoobscura pseudoobscura (Fruit fly).